The chain runs to 548 residues: Membrane protein insertase YidC (548 aa).

The helical transmembrane segment at 6–26 threads the bilayer; it reads NLLIIALLFVSFMIWQAWEQD. The tract at residues 28-52 is disordered; it reads NPQPQQQTTQTTTTAAGSAADQGVP. Low complexity predominate over residues 29–41; it reads PQPQQQTTQTTTT. Helical transmembrane passes span 345 to 365, 420 to 440, 458 to 478, and 499 to 519; these read KFIH…TFIV, LGGC…YYML, LSAQ…MFFI, and PVIF…YYIV.

Belongs to the OXA1/ALB3/YidC family. Type 1 subfamily. As to quaternary structure, interacts with the Sec translocase complex via SecD. Specifically interacts with transmembrane segments of nascent integral membrane proteins during membrane integration.

The protein resides in the cell inner membrane. Functionally, required for the insertion and/or proper folding and/or complex formation of integral membrane proteins into the membrane. Involved in integration of membrane proteins that insert both dependently and independently of the Sec translocase complex, as well as at least some lipoproteins. Aids folding of multispanning membrane proteins. The polypeptide is Membrane protein insertase YidC (Klebsiella pneumoniae (strain 342)).